A 224-amino-acid chain; its full sequence is Ribonuclease HII (224 aa).

In terms of domain architecture, RNase H type-2 spans 33-224; sequence FHVAGVDEVG…LKERYRNDVS (192 aa). Positions 39, 40, and 131 each coordinate a divalent metal cation.

It belongs to the RNase HII family. Mn(2+) serves as cofactor. Requires Mg(2+) as cofactor.

The protein resides in the cytoplasm. It catalyses the reaction Endonucleolytic cleavage to 5'-phosphomonoester.. Endonuclease that specifically degrades the RNA of RNA-DNA hybrids. This Bartonella tribocorum (strain CIP 105476 / IBS 506) protein is Ribonuclease HII.